We begin with the raw amino-acid sequence, 238 residues long: MNISGSIKQKLLQFLKKQKSPELLATYLFYLEQSLHLSPVVFVRDKIIFKSAEDAIQLLEADKKIWRETEIQISSGKPEVNEQTKRIYICPFTGKVFADNVYANPQDAIYDWLSSCPQNRERQSGVAVKRFLVSDDPEVIRAYIVPPKEPIIKTVYASAVTGKLFHSLPTLLEDFKTSYLRPMTLEEVQNQNKFQLESSFLTLLQDALEEEKIAEFVESLADDTAFHKYISQWVDTEE.

Belongs to the chlamydial CPn_0658/CT_538/TC_0825 family.

This is an uncharacterized protein from Chlamydia trachomatis serovar D (strain ATCC VR-885 / DSM 19411 / UW-3/Cx).